The following is a 579-amino-acid chain: MFS-type transporter ppz2 (579 aa).

The interval 1–23 (MQTATALEDSANAPSPAASSQGQ) is disordered. The span at 10 to 20 (SANAPSPAASS) shows a compositional bias: low complexity. Asn-38 is a glycosylation site (N-linked (GlcNAc...) asparagine). A run of 14 helical transmembrane segments spans residues 48 to 68 (ALIM…NTII), 83 to 103 (AAYT…TMVW), 121 to 141 (LCFF…MLIA), 145 to 165 (IQGI…GDLF), 171 to 191 (GLYY…GPVV), 203 to 223 (WCFY…ILLL), 236 to 256 (IAAI…MILL), 269 to 289 (SATV…CFSW), 298 to 318 (LLPV…ACFI), 336 to 356 (AVLG…AVSI), 374 to 394 (LTPI…FIDL), 403 to 423 (IIVF…APMV), 438 to 460 (TSAY…QTVF), and 516 to 536 (SMWI…PFLG).

This sequence belongs to the major facilitator superfamily. TCR/Tet family.

It localises to the membrane. MFS-type transporter; part of the gene cluster that mediates the biosynthesis of pyrrolopyrazines, secondary metabolites showing insecticidal activity. Probably involved in the secretion of peramine and other pyrrolopyrazines. This chain is MFS-type transporter ppz2, found in Metarhizium majus (strain ARSEF 297).